Reading from the N-terminus, the 353-residue chain is MNSLLLHCRPGFEGEVCAEIGEHAGRLNVAGYARAKPNSAHAEFVCSEPGGAERLMRELRFAGLVFPRQWARGAFVELPESERIGVLLEHLAAYPVCGSLWLEVLDSNEGKELSTFCRKFEVPLRKALGKTGRLLDDPRRPRLLLTFRSGREVFLGLAEPDNSAAWPMGIPRLKFPREAPSRSTLKLEEAWHQFIPREAWDLRLAPGMSAVDLGAAPGGWTWQLVNRHMKVTAVDNGPMAQSLMDSGLVEHVRADGFVFRPRRPVDWMVCDIVEKPARTAALIETWLGEGLCREAVVNLKLPMKQRHAEVRRLLERIRDGLSARGAKVSVACRQLYHDREEVTCHLCRLPAPA.

Residues S183, 216–219 (APGG), D235, D255, and D271 each bind S-adenosyl-L-methionine. The active-site Proton acceptor is K300.

This sequence belongs to the class I-like SAM-binding methyltransferase superfamily. RNA methyltransferase RlmE family. RlmM subfamily. As to quaternary structure, monomer.

It is found in the cytoplasm. The catalysed reaction is cytidine(2498) in 23S rRNA + S-adenosyl-L-methionine = 2'-O-methylcytidine(2498) in 23S rRNA + S-adenosyl-L-homocysteine + H(+). In terms of biological role, catalyzes the 2'-O-methylation at nucleotide C2498 in 23S rRNA. The polypeptide is Ribosomal RNA large subunit methyltransferase M (Azotobacter vinelandii (strain DJ / ATCC BAA-1303)).